A 231-amino-acid polypeptide reads, in one-letter code: Ribosyldihydronicotinamide dehydrogenase [quinone] (231 aa).

FAD is bound by residues H12, 18 to 21 (FNGS), and 104 to 107 (LYWF). 127-129 (FDI) is a substrate binding site. Residues 148–151 (TTGG) and Y156 each bind FAD. The Zn(2+) site is built by H174 and H178. Residue D194 participates in FAD binding. Position 197 is a phosphoserine (S197). R201 contacts FAD. C223 contacts Zn(2+).

The protein belongs to the NAD(P)H dehydrogenase (quinone) family. In terms of assembly, homodimer. Requires Zn(2+) as cofactor. It depends on FAD as a cofactor.

The protein resides in the cytoplasm. It catalyses the reaction 1-(beta-D-ribofuranosyl)-1,4-dihydronicotinamide + a quinone + H(+) = beta-nicotinamide D-riboside + a quinol. Its function is as follows. The enzyme apparently serves as a quinone reductase in connection with conjugation reactions of hydroquinones involved in detoxification pathways as well as in biosynthetic processes such as the vitamin K-dependent gamma-carboxylation of glutamate residues in prothrombin synthesis. The protein is Ribosyldihydronicotinamide dehydrogenase [quinone] (Nqo2) of Mus musculus (Mouse).